A 247-amino-acid polypeptide reads, in one-letter code: ATP synthase subunit a, chloroplastic (247 aa).

Helical transmembrane passes span Gln38 to Val58, Val95 to Leu115, Ile134 to Ser154, Leu199 to Leu219, and Gly220 to Gly240.

This sequence belongs to the ATPase A chain family. In terms of assembly, F-type ATPases have 2 components, CF(1) - the catalytic core - and CF(0) - the membrane proton channel. CF(1) has five subunits: alpha(3), beta(3), gamma(1), delta(1), epsilon(1). CF(0) has four main subunits: a, b, b' and c.

The protein localises to the plastid. It localises to the chloroplast thylakoid membrane. Its function is as follows. Key component of the proton channel; it plays a direct role in the translocation of protons across the membrane. The chain is ATP synthase subunit a, chloroplastic from Populus trichocarpa (Western balsam poplar).